The chain runs to 123 residues: Large ribosomal subunit protein bL17 (123 aa).

Belongs to the bacterial ribosomal protein bL17 family. Part of the 50S ribosomal subunit. Contacts protein L32.

This chain is Large ribosomal subunit protein bL17, found in Exiguobacterium sibiricum (strain DSM 17290 / CCUG 55495 / CIP 109462 / JCM 13490 / 255-15).